The primary structure comprises 169 residues: MASPDVEYRCFVGGLAWATDERSLETAFSQFGELVDSKIINDRETGRSRGFGFVTFKDEKSMKDAIEGMNGQDLDGRSITVNEAQSRGSGAGGGGRGGGGGYRGGGGYGGGGGGYGGGRREGGGYSGGGGGYSSRGGGGGGYGGGGRRDGGGYGGGEGGGYGGGGGGGW.

An RRM domain is found at 8 to 86 (YRCFVGGLAW…RSITVNEAQS (79 aa)). 2 disordered regions span residues 69-100 (MNGQ…GGGG) and 125-169 (YSGG…GGGW). The segment covering 89-100 (SGAGGGGRGGGG) has biased composition (gly residues).

As to expression, predominantly expressed in meristematic and growing tissue.

Its subcellular location is the nucleus. In terms of biological role, may play a general role in circadian phenomena associated with meristematic tissue. The protein is Glycine-rich RNA-binding protein GRP2A of Sinapis alba (White mustard).